The primary structure comprises 131 residues: Large ribosomal subunit protein bL19 (131 aa).

It belongs to the bacterial ribosomal protein bL19 family.

Functionally, this protein is located at the 30S-50S ribosomal subunit interface and may play a role in the structure and function of the aminoacyl-tRNA binding site. The polypeptide is Large ribosomal subunit protein bL19 (Anaeromyxobacter sp. (strain K)).